Consider the following 657-residue polypeptide: Glycogen debranching enzyme (657 aa).

Asp336 serves as the catalytic Nucleophile. Glu371 serves as the catalytic Proton donor. A disordered region spans residues 460-481; that stretch reads ANGEENRDGTNNNYSNNHGKEG.

Belongs to the glycosyl hydrolase 13 family.

It catalyses the reaction Hydrolysis of (1-&gt;6)-alpha-D-glucosidic linkages to branches with degrees of polymerization of three or four glucose residues in limit dextrin.. It functions in the pathway glycan degradation; glycogen degradation. In terms of biological role, removes maltotriose and maltotetraose chains that are attached by 1,6-alpha-linkage to the limit dextrin main chain, generating a debranched limit dextrin. The protein is Glycogen debranching enzyme of Escherichia coli O157:H7.